The following is a 324-amino-acid chain: DNA repair and recombination protein RadA (324 aa).

ATP is bound at residue 114 to 121; the sequence is GEFGSGKT.

Belongs to the eukaryotic RecA-like protein family.

In terms of biological role, involved in DNA repair and in homologous recombination. Binds and assemble on single-stranded DNA to form a nucleoprotein filament. Hydrolyzes ATP in a ssDNA-dependent manner and promotes DNA strand exchange between homologous DNA molecules. The polypeptide is DNA repair and recombination protein RadA (Saccharolobus islandicus (strain Y.N.15.51 / Yellowstone #2) (Sulfolobus islandicus)).